The primary structure comprises 407 residues: Putative aspartate aminotransferase, cytoplasmic 2 (407 aa).

K249 is modified (N6-(pyridoxal phosphate)lysine).

The protein belongs to the class-I pyridoxal-phosphate-dependent aminotransferase family. As to quaternary structure, homodimer. Pyridoxal 5'-phosphate serves as cofactor.

The protein resides in the cytoplasm. The catalysed reaction is L-aspartate + 2-oxoglutarate = oxaloacetate + L-glutamate. This Bos taurus (Bovine) protein is Putative aspartate aminotransferase, cytoplasmic 2 (GOT1L1).